The sequence spans 425 residues: MLDIRFVRESPDVVRADLRKRNDLEKLAWVDDLLAKDSQARAMQVKVDELRRRRNEISREINEARKAGKDTSALMAEARDIPRQIKEAETEMEESRNKVHYYLMRLPNILDDSVPVGKDDTENVEVKRWGEPVQKDFEIKNHGLLAVEHGWADFERAAKVAGAGFYFLKGNMVLLDMALQRFAMDLLVKRGFTPVTPPYMMNRKSYEGVTDLADFEKVMYKIEGDDMYLIATSEHPIGAMYQGEIFEEKDLPLRLAGISPCFRREIGAHGLDTKGLFRVHQFHKIEQFVFCKPEDSWKIHEEILANAEAVFQQLGLPYHVVNICTGDIGTVAAKKYDIEVWMPRENTYKEVVSCSNCTAYQATRLNIKVRDPKDFESKRYVHTLNSTAIATSRAMRAILENNQQKDGSVLIPEVLRPYMNGLEYL.

232 to 234 (TSE) provides a ligand contact to L-serine. ATP-binding positions include 263–265 (RRE) and Val279. Position 286 (Glu286) interacts with L-serine. 350-353 (EVVS) contacts ATP. Residue Thr387 participates in L-serine binding.

The protein belongs to the class-II aminoacyl-tRNA synthetase family. Type-1 seryl-tRNA synthetase subfamily. Homodimer. The tRNA molecule binds across the dimer.

It localises to the cytoplasm. It catalyses the reaction tRNA(Ser) + L-serine + ATP = L-seryl-tRNA(Ser) + AMP + diphosphate + H(+). The enzyme catalyses tRNA(Sec) + L-serine + ATP = L-seryl-tRNA(Sec) + AMP + diphosphate + H(+). The protein operates within aminoacyl-tRNA biosynthesis; selenocysteinyl-tRNA(Sec) biosynthesis; L-seryl-tRNA(Sec) from L-serine and tRNA(Sec): step 1/1. Its function is as follows. Catalyzes the attachment of serine to tRNA(Ser). Is also able to aminoacylate tRNA(Sec) with serine, to form the misacylated tRNA L-seryl-tRNA(Sec), which will be further converted into selenocysteinyl-tRNA(Sec). The polypeptide is Serine--tRNA ligase (Methanocella arvoryzae (strain DSM 22066 / NBRC 105507 / MRE50)).